The sequence spans 348 residues: tRNA pseudouridine synthase D (348 aa).

Residue Phe27 coordinates substrate. Asp80 acts as the Nucleophile in catalysis. Asn129 is a substrate binding site. Residues 155–303 (GVPNYFGSQR…VESARRAVLL (149 aa)) enclose the TRUD domain. Phe329 lines the substrate pocket.

This sequence belongs to the pseudouridine synthase TruD family.

The enzyme catalyses uridine(13) in tRNA = pseudouridine(13) in tRNA. Functionally, responsible for synthesis of pseudouridine from uracil-13 in transfer RNAs. This chain is tRNA pseudouridine synthase D, found in Pectobacterium carotovorum subsp. carotovorum (strain PC1).